Reading from the N-terminus, the 145-residue chain is Thioredoxin C-3 (145 aa).

3 residues coordinate heme: Cys-25, Cys-28, and His-29. A Thioredoxin domain is found at 29–140 (HQALLPLEPI…LQQWLDQQLQ (112 aa)). A disulfide bond links Cys-65 and Cys-68.

The protein belongs to the thioredoxin family.

Functionally, participates in various redox reactions through the reversible oxidation of its active center dithiol to a disulfide and catalyzes dithiol-disulfide exchange reactions. In Corynebacterium nephridii, this protein is Thioredoxin C-3.